Here is an 838-residue protein sequence, read N- to C-terminus: Pentatricopeptide repeat-containing protein At4g19440, chloroplastic (838 aa).

Residues 1 to 32 (MAALLYFPKISSQMTSSHFISFSPMDLRRLSR) constitute a chloroplast transit peptide. PPR repeat units lie at residues 238–268 (SKTTCNILLTSLVRANEFQKCCEAFDVVCKG), 272–306 (DVYLFTTAINAFCKGGKVEEAVKLFSKMEEAGVAP), 307–341 (NVVTFNTVIDGLGMCGRYDEAFMFKEKMVERGMEP), 342–376 (TLITYSILVKGLTRAKRIGDAYFVLKEMTKKGFPP), 377–411 (NVIVYNNLIDSFIEAGSLNKAIEIKDLMVSKGLSL), 412–446 (TSSTYNTLIKGYCKNGQADNAERLLKEMLSIGFNV), 447–481 (NQGSFTSVICLLCSHLMFDSALRFVGEMLLRNMSP), 482–516 (GGGLLTTLISGLCKHGKHSKALELWFQFLNKGFVV), 517–551 (DTRTSNALLHGLCEAGKLDEAFRIQKEILGRGCVM), 552–586 (DRVSYNTLISGCCGKKKLDEAFMFLDEMVKRGLKP), 587–621 (DNYTYSILICGLFNMNKVEEAIQFWDDCKRNGMLP), 622–656 (DVYTYSVMIDGCCKAERTEEGQEFFDEMMSKNVQP), 657–691 (NTVVYNHLIRAYCRSGRLSMALELREDMKHKGISP), 692–726 (NSATYTSLIKGMSIISRVEEAKLLFEEMRMEGLEP), 727–761 (NVFHYTALIDGYGKLGQMVKVECLLREMHSKNVHP), and 762–796 (NKITYTVMIGGYARDGNVTEASRLLNEMREKGIVP).

Belongs to the PPR family. P subfamily.

The protein localises to the plastid. It is found in the chloroplast. The sequence is that of Pentatricopeptide repeat-containing protein At4g19440, chloroplastic from Arabidopsis thaliana (Mouse-ear cress).